A 216-amino-acid polypeptide reads, in one-letter code: Cyclo(L-leucyl-L-leucyl) synthase (216 aa).

Ser-14 acts as the Nucleophile in catalysis. Residues Asn-17, 155-159, and Tyr-179 each bind substrate; that span reads YIFDE.

The protein belongs to the CDPS family.

It catalyses the reaction 2 L-leucyl-tRNA(Leu) = cyclo(L-leucyl-L-leucyl) + 2 tRNA(Leu) + 2 H(+). It uses activated amino acids in the form of aminoacyl-tRNAs (aa-tRNAs) as substrates to catalyze the ATP-independent formation of cyclodipeptides which are intermediates in diketopiperazine (DKP) biosynthetic pathways. Catalyzes the formation of cyclo(L-Leu-L-Leu) (cLL) from L-leucyl-tRNA(Leu). Can incorporate various nonpolar residues, such as L-leucine and L-methionine, into cyclodipeptides. This chain is Cyclo(L-leucyl-L-leucyl) synthase, found in Corynebacterium jeikeium (strain K411).